The sequence spans 271 residues: Pyrroline-5-carboxylate reductase (271 aa).

This sequence belongs to the pyrroline-5-carboxylate reductase family.

It localises to the cytoplasm. It carries out the reaction L-proline + NADP(+) = (S)-1-pyrroline-5-carboxylate + NADPH + 2 H(+). It catalyses the reaction L-proline + NAD(+) = (S)-1-pyrroline-5-carboxylate + NADH + 2 H(+). The protein operates within amino-acid biosynthesis; L-proline biosynthesis; L-proline from L-glutamate 5-semialdehyde: step 1/1. Catalyzes the reduction of 1-pyrroline-5-carboxylate (PCA) to L-proline. The sequence is that of Pyrroline-5-carboxylate reductase from Staphylococcus epidermidis (strain ATCC 35984 / DSM 28319 / BCRC 17069 / CCUG 31568 / BM 3577 / RP62A).